A 502-amino-acid polypeptide reads, in one-letter code: Cytochrome P450 71B10 (502 aa).

Residues 1–21 (MTVLWFVSLILLISILLVAVK) form a helical membrane-spanning segment. Cys-443 lines the heme pocket.

Belongs to the cytochrome P450 family. It depends on heme as a cofactor.

The protein resides in the membrane. The protein is Cytochrome P450 71B10 (CYP71B10) of Arabidopsis thaliana (Mouse-ear cress).